We begin with the raw amino-acid sequence, 218 residues long: Elongation factor Ts (218 aa).

Residues 82–85 (TDFV) are involved in Mg(2+) ion dislocation from EF-Tu.

The protein belongs to the EF-Ts family.

Its subcellular location is the cytoplasm. Functionally, associates with the EF-Tu.GDP complex and induces the exchange of GDP to GTP. It remains bound to the aminoacyl-tRNA.EF-Tu.GTP complex up to the GTP hydrolysis stage on the ribosome. The sequence is that of Elongation factor Ts from Prochlorococcus marinus (strain MIT 9211).